We begin with the raw amino-acid sequence, 475 residues long: ATP-dependent protease ATPase subunit HslU1 (475 aa).

The transit peptide at 1 to 27 (MMRRVTSSLPSALKLGRSLGPNVRFSG) directs the protein to the mitochondrion. Residues Ile-66, 108–113 (GVGKTE), Asp-286, Glu-353, and Arg-425 contribute to the ATP site.

This sequence belongs to the ClpX chaperone family. HslU subfamily. As to quaternary structure, a double ring-shaped homohexamer of HslV is capped on each side by a ring-shaped HslU homohexamer. The assembly of the HslU/HslV complex (HslVU) is dependent on binding of ATP.

Its subcellular location is the mitochondrion matrix. The protein localises to the kinetoplast. Its function is as follows. ATPase subunit of a proteasome-like degradation complex; this subunit has chaperone activity. The binding of ATP and its subsequent hydrolysis by HslU are essential for unfolding of protein substrates subsequently hydrolyzed by HslV. HslU recognizes the N-terminal part of its protein substrates and unfolds these before they are guided to HslV for hydrolysis. The HslVU protease complex functions in mitochondrial DNA replication by regulating DNA helicase PIF2 protein levels. The protein is ATP-dependent protease ATPase subunit HslU1 (HslU1) of Trypanosoma brucei brucei (strain 927/4 GUTat10.1).